The chain runs to 414 residues: 4-hydroxy-3-methylbut-2-en-1-yl diphosphate synthase (flavodoxin) (414 aa).

[4Fe-4S] cluster contacts are provided by cysteine 304, cysteine 307, cysteine 350, and glutamate 357.

Belongs to the IspG family. The cofactor is [4Fe-4S] cluster.

The catalysed reaction is (2E)-4-hydroxy-3-methylbut-2-enyl diphosphate + oxidized [flavodoxin] + H2O + 2 H(+) = 2-C-methyl-D-erythritol 2,4-cyclic diphosphate + reduced [flavodoxin]. It participates in isoprenoid biosynthesis; isopentenyl diphosphate biosynthesis via DXP pathway; isopentenyl diphosphate from 1-deoxy-D-xylulose 5-phosphate: step 5/6. Functionally, converts 2C-methyl-D-erythritol 2,4-cyclodiphosphate (ME-2,4cPP) into 1-hydroxy-2-methyl-2-(E)-butenyl 4-diphosphate. In Aromatoleum aromaticum (strain DSM 19018 / LMG 30748 / EbN1) (Azoarcus sp. (strain EbN1)), this protein is 4-hydroxy-3-methylbut-2-en-1-yl diphosphate synthase (flavodoxin).